A 418-amino-acid chain; its full sequence is Phospho-N-acetylmuramoyl-pentapeptide-transferase (418 aa).

10 consecutive transmembrane segments (helical) span residues 22–42 (YISF…VLIG), 72–92 (TPTM…LLLA), 95–115 (SNIY…LGLI), 135–155 (IIAQ…SPNI), 208–228 (AATW…VSNG), 244–264 (AIIG…GFAA), 277–297 (LTVF…HNAF), 302–322 (FMGD…AIII), 326–346 (LLLP…MIQV), and 395–415 (KIVV…VVTL).

This sequence belongs to the glycosyltransferase 4 family. MraY subfamily. Mg(2+) serves as cofactor.

It localises to the cell inner membrane. The enzyme catalyses UDP-N-acetyl-alpha-D-muramoyl-L-alanyl-gamma-D-glutamyl-meso-2,6-diaminopimeloyl-D-alanyl-D-alanine + di-trans,octa-cis-undecaprenyl phosphate = di-trans,octa-cis-undecaprenyl diphospho-N-acetyl-alpha-D-muramoyl-L-alanyl-D-glutamyl-meso-2,6-diaminopimeloyl-D-alanyl-D-alanine + UMP. The protein operates within cell wall biogenesis; peptidoglycan biosynthesis. Catalyzes the initial step of the lipid cycle reactions in the biosynthesis of the cell wall peptidoglycan: transfers peptidoglycan precursor phospho-MurNAc-pentapeptide from UDP-MurNAc-pentapeptide onto the lipid carrier undecaprenyl phosphate, yielding undecaprenyl-pyrophosphoryl-MurNAc-pentapeptide, known as lipid I. The chain is Phospho-N-acetylmuramoyl-pentapeptide-transferase from Azobacteroides pseudotrichonymphae genomovar. CFP2.